Reading from the N-terminus, the 250-residue chain is Non-specific acid phosphatase (250 aa).

The signal sequence occupies residues 1-20 (MKSRYLLFFLPLIVAKYTSA).

It belongs to the class A bacterial acid phosphatase family. As to quaternary structure, homodimer.

It localises to the periplasm. The enzyme catalyses a phosphate monoester + H2O = an alcohol + phosphate. This Salmonella typhi protein is Non-specific acid phosphatase (phoN).